The following is a 174-amino-acid chain: WAP four-disulfide core domain protein 2 (174 aa).

The N-terminal stretch at 1 to 25 (MPACRLCLLAAGLLLGLLLFTPISA) is a signal peptide. The WAP 1 domain maps to 29-74 (DAEKPGECPQLEPITDCVLECTLDKDCADNRKCCQAGCSSVCSKPN). Intrachain disulfides connect Cys36-Cys62, Cys45-Cys66, Cys49-Cys61, and Cys55-Cys70. A disordered region spans residues 68-117 (SVCSKPNGPSEGELSGTDTKLSETGTTTQSAGLDHTTKPPGGQVSTKPPA). A compositionally biased stretch (polar residues) spans 83–98 (GTDTKLSETGTTTQSA). Positions 125–173 (VREKQGTCPSVDIPKLGLCEDQCQVDSQCSGNMKCCRNGCGKMACTTPK) constitute a WAP 2 domain. 4 disulfides stabilise this stretch: Cys132–Cys160, Cys143–Cys164, Cys147–Cys159, and Cys153–Cys169.

Homotrimer; disulfide-linked.

It is found in the secreted. Broad range protease inhibitor. The sequence is that of WAP four-disulfide core domain protein 2 (Wfdc2) from Mus musculus (Mouse).